Consider the following 477-residue polypeptide: Calcium uptake protein 1, mitochondrial (477 aa).

The N-terminal 33 residues, methionine 1 to leucine 33, are a transit peptide targeting the mitochondrion. The tract at residues alanine 55–phenylalanine 108 is disordered. The segment covering lysine 66–serine 84 has biased composition (basic and acidic residues). Positions lysine 101–lysine 112 are polybasic region. Phosphoserine is present on serine 124. The interval lysine 128–arginine 131 is k/R-ring. Residues threonine 220 to glutamine 255 form the EF-hand 1 domain. 5 residues coordinate Ca(2+): aspartate 233, asparagine 235, aspartate 237, glutamate 239, and glutamate 244. A k/R-ring region spans residues arginine 261 to arginine 265. The region spanning lysine 356 to isoleucine 376 is the EF-hand 2; degenerate domain. An EF-hand 3 domain is found at leucine 410–arginine 445. Ca(2+) is bound by residues aspartate 423, aspartate 425, asparagine 427, glutamate 429, and glutamate 434. Arginine 457 carries the post-translational modification Asymmetric dimethylarginine. The C-helix region stretch occupies residues arginine 457 to glutamine 467.

Belongs to the MICU1 family. MICU1 subfamily. Heterodimer; disulfide-linked; heterodimerizes with MICU2 or MICU3. Homodimer; disulfide-linked. Component of the uniplex complex, composed of MCU, EMRE/SMDT1, MICU1 and MICU2 (or MICU3) in a 4:4:1:1 stoichiometry. The composition of calcium sensors within the uniplex complex can differ depending on tissues: a MICU1 homodimer can be present instead of the MICU1-MICU2 heterodimer in skeletal-muscle and kidney. MICU1 is recruited to the uniplex complex by EMRE/SMDT1, and it associates with MCU at low calcium levels, occluding the pore of the MCU channel. Associates with the MICOS complex. Interacts with SLC25A23. Interacts with CHCHD4/MIA40; which introduces the interchain disulfide bond with MICU2. Interacts (when methylated) with UCP2; leading to decrease the calcium sensitivity of MICU1. Post-translationally, phosphorylation at Ser-124 by AKT1 impairs its maturation and stability. In terms of processing, asymmetric dimethylation at Arg-457 by PRMT1 decreases the calcium sensitivity of MICU1 by promoting interaction with UCP2. Degraded by YME1L1 when not complexed as homodimer or heterodimer. Not degraded when complexed as homodimer or heterodimer; the presence of the interchain disulfide bond protecting MICU1 from degradation by YME1L1.

It is found in the mitochondrion intermembrane space. The protein resides in the mitochondrion inner membrane. Calcium sensor of the mitochondrial calcium uniporter (MCU) channel, which senses calcium level via its EF-hand domains. MICU1 and MICU2 (or MICU3) form a disulfide-linked heterodimer that stimulates and inhibits MCU activity, depending on the concentration of calcium. At low calcium levels, MICU1 occludes the pore of the MCU channel, preventing mitochondrial calcium uptake. At higher calcium levels, calcium-binding to MICU1 and MICU2 (or MICU3) induces a conformational change that weakens MCU-MICU1 interactions and moves the MICU1-MICU2 heterodimer away from the pore, allowing calcium permeation through the MCU channel. Also required to protect against manganese toxicity by preventing manganese uptake by MCU: mechanistically, manganese-binding to its EF-hand domains does not induce any conformational change, maintaining MCU pore occlusion. Acts as a regulator of mitochondrial cristae structure independently of its ability to regulate the mitochondrial calcium uniporter channel. Regulates glucose-dependent insulin secretion in pancreatic beta-cells by regulating mitochondrial calcium uptake. Induces T-helper 1-mediated autoreactivity, which is accompanied by the release of IFNG. The chain is Calcium uptake protein 1, mitochondrial (Micu1) from Rattus norvegicus (Rat).